The sequence spans 287 residues: Inorganic pyrophosphatase (287 aa).

Arginine 79 serves as a coordination point for diphosphate. 3 residues coordinate Mg(2+): aspartate 116, aspartate 121, and aspartate 153.

It belongs to the PPase family. Requires Mg(2+) as cofactor.

The protein resides in the cytoplasm. The catalysed reaction is diphosphate + H2O = 2 phosphate + H(+). The sequence is that of Inorganic pyrophosphatase (IPP1) from Debaryomyces hansenii (strain ATCC 36239 / CBS 767 / BCRC 21394 / JCM 1990 / NBRC 0083 / IGC 2968) (Yeast).